Reading from the N-terminus, the 127-residue chain is UPF0102 protein SYNAS_23220 (127 aa).

The protein belongs to the UPF0102 family.

The protein is UPF0102 protein SYNAS_23220 of Syntrophus aciditrophicus (strain SB).